Here is a 643-residue protein sequence, read N- to C-terminus: MEKSSSCESLGSQPAAARPPSVDSLSSASTSHSENSVHTKSASVVSSDSISTSADNFSPDLRVLRESNKLAEMEEPPLLPGENIKDMAKDVTYICPFTGAVRGTLTVTNYRLYFKSMERDPPFVLDASLGVINRVEKIGGASSRGENSYGLETVCKDIRNLRFAHKPEGRTRRSIFENLMKYAFPVSNNLPLFAFEYKEVFPENGWKLYDPLLEYRRQGIPNESWRITKINERYELCDTYPALLVVPANIPDEELKRVASFRSRGRIPVLSWIHPESQATITRCSQPMVGVSGKRSKEDEKYLQAIMDSNAQSHEIFIFDARPSVNAVANKAKGGGYESEDAYQNAELVFLDIHNIHVMRESLRKLKEIVYPNIEETHWLSNLESTHWLEHIKLILAGALRIADKVESGKTSVIVHCSDGWDRTAQLTSLAMLMLDGYYRTTRGFEVLVEKEWLSFGHRFQLRVGHGDKNHADADRSPVFLQFIDCVWQMTRQFPTAFEFNEYFLITILDHLYSCLFGTFLCNSEQQRGKENLPKRTVSLWSYINSQLEDFTNPLYGSYSNHVLYPVASMRHLELWVGYYIRWNPRMKPQEPIHNRYKELLAKRAELQKKVEELQREISNRSTSSSERASSPAQCVTPVQTVV.

Polar residues-rich tracts occupy residues 1–12 (MEKSSSCESLGS) and 23–40 (DSLS…VHTK). The disordered stretch occupies residues 1–56 (MEKSSSCESLGSQPAAARPPSVDSLSSASTSHSENSVHTKSASVVSSDSISTSADN). 2 positions are modified to phosphoserine: serine 6 and serine 9. Residues 41–55 (SASVVSSDSISTSAD) show a composition bias toward low complexity. Serine 58 bears the Phosphoserine mark. The GRAM domain maps to 68-139 (NKLAEMEEPP…GVINRVEKIG (72 aa)). The 376-residue stretch at 205 to 580 (GWKLYDPLLE…RHLELWVGYY (376 aa)) folds into the Myotubularin phosphatase domain. Residues asparagine 330, asparagine 355, and isoleucine 356 each contribute to the a 1,2-diacyl-sn-glycero-3-phospho-(1D-myo-inositol-3,5-bisphosphate) site. A 1,2-diacyl-sn-glycero-3-phospho-(1D-myo-inositol-3-phosphate) is bound by residues asparagine 330, asparagine 355, and isoleucine 356. The active-site Phosphocysteine intermediate is the cysteine 417. The a 1,2-diacyl-sn-glycero-3-phospho-(1D-myo-inositol-3,5-bisphosphate) site is built by serine 418, aspartate 419, glycine 420, tryptophan 421, aspartate 422, arginine 423, arginine 459, and arginine 463. Positions 418, 419, 420, 421, 422, and 423 each coordinate a 1,2-diacyl-sn-glycero-3-phospho-(1D-myo-inositol-3-phosphate). Arginine 463 provides a ligand contact to a 1,2-diacyl-sn-glycero-3-phospho-(1D-myo-inositol-3-phosphate). Residues 593-627 (IHNRYKELLAKRAELQKKVEELQREISNRSTSSSE) adopt a coiled-coil conformation. A disordered region spans residues 615-643 (QREISNRSTSSSERASSPAQCVTPVQTVV). Positions 620–631 (NRSTSSSERASS) are enriched in low complexity. Polar residues predominate over residues 632 to 643 (PAQCVTPVQTVV).

The protein belongs to the protein-tyrosine phosphatase family. Non-receptor class myotubularin subfamily. As to quaternary structure, homodimer (via coiled-coil domain). Heterotetramer consisting of one MTMR2 dimer and one SBF2/MTMR13 dimer; specifically in peripheral nerves stabilizes SBF2/MTMR13 at the membranes and increases MTMR2 catalytic activity towards phosphatidylinositol 3,5-bisphosphate and to a lesser extent towards phosphatidylinositol 3-phosphate. Heterodimer with SBF1/MTMR5; acts as an adapter for the phosphatase MTMR2 to regulate MTMR2 catalytic activity and subcellular location. Heterodimer with MTMR12. Post-translationally, phosphorylation at Ser-58 decreases MTMR2 localization to endocytic vesicular structures.

Its subcellular location is the cytoplasm. It localises to the early endosome membrane. It is found in the perinuclear region. The protein resides in the cell projection. The protein localises to the axon. Its subcellular location is the endosome membrane. It carries out the reaction a 1,2-diacyl-sn-glycero-3-phospho-(1D-myo-inositol-3,5-bisphosphate) + H2O = a 1,2-diacyl-sn-glycero-3-phospho-(1D-myo-inositol-5-phosphate) + phosphate. The catalysed reaction is a 1,2-diacyl-sn-glycero-3-phospho-(1D-myo-inositol-3-phosphate) + H2O = a 1,2-diacyl-sn-glycero-3-phospho-(1D-myo-inositol) + phosphate. The enzyme catalyses 1,2-dioctanoyl-sn-glycero-3-phospho-(1-D-myo-inositol-3-phosphate) + H2O = 1,2-dioctanoyl-sn-glycero-3-phospho-(1D-myo-inositol) + phosphate. It catalyses the reaction 1,2-dioctanoyl-sn-glycero-3-phospho-(1D-myo-inositol-3,5-bisphosphate) + H2O = 1,2-dioctanoyl-sn-glycero-3-phospho-(1D-myo-inositol-5-phosphate) + phosphate. Lipid phosphatase that specifically dephosphorylates the D-3 position of phosphatidylinositol 3-phosphate and phosphatidylinositol 3,5-bisphosphate, generating phosphatidylinositol and phosphatidylinositol 5-phosphate. Regulates the level of these phosphoinositides critical for various biological processes including autophagy initiation and autophagosome maturation. The chain is Phosphatidylinositol-3,5-bisphosphate 3-phosphatase MTMR2 from Pongo abelii (Sumatran orangutan).